A 388-amino-acid chain; its full sequence is Beta-hexosaminidase LpqI (388 aa).

A signal peptide spans 1 to 19; the sequence is MAFPRTLAILAAAAALVVA. A lipid anchor (N-palmitoyl cysteine) is attached at Cys-20. Cys-20 carries the S-diacylglycerol cysteine lipid modification. Substrate-binding positions include Asp-123, Arg-131, Arg-193, and 223–224; that span reads KH. The active-site Proton donor/acceptor is His-236. Residue Asp-311 is the Nucleophile of the active site.

It belongs to the glycosyl hydrolase 3 family.

It localises to the cell inner membrane. It carries out the reaction Hydrolysis of terminal non-reducing N-acetyl-D-hexosamine residues in N-acetyl-beta-D-hexosaminides.. It functions in the pathway cell wall biogenesis; peptidoglycan recycling. In terms of biological role, plays a role in peptidoglycan recycling by cleaving the terminal beta-1,4-linked N-acetylglucosamine (GlcNAc) from peptidoglycan fragments. Acts as a regulator for GlcNAc-MurNAc levels by cleaving disaccharides and allowing the breakdown of MurNAc. The sequence is that of Beta-hexosaminidase LpqI from Mycobacterium bovis (strain BCG / Pasteur 1173P2).